The chain runs to 304 residues: Ribonuclease BN (304 aa).

Residues His-63, His-65, Asp-67, His-68, His-140, Asp-211, and His-269 each coordinate Zn(2+). The Proton acceptor role is filled by Asp-67.

Belongs to the RNase Z family. RNase BN subfamily. As to quaternary structure, homodimer. It depends on Zn(2+) as a cofactor.

Its function is as follows. Zinc phosphodiesterase, which has both exoribonuclease and endoribonuclease activities. This is Ribonuclease BN from Erwinia tasmaniensis (strain DSM 17950 / CFBP 7177 / CIP 109463 / NCPPB 4357 / Et1/99).